The sequence spans 348 residues: D-alanine--D-alanine ligase (348 aa).

In terms of domain architecture, ATP-grasp spans 132 to 334 (KRVLESIGIP…YPDLIEVLVT (203 aa)). ATP is bound at residue 162–217 (LARLTFPIFVKPANMGSSVGISKAQTKVELRKAIQLALTYDSRVLIEQGVVAREIE). Residues aspartate 288, glutamate 301, and asparagine 303 each coordinate Mg(2+).

Belongs to the D-alanine--D-alanine ligase family. Mg(2+) serves as cofactor. It depends on Mn(2+) as a cofactor.

It localises to the cytoplasm. The catalysed reaction is 2 D-alanine + ATP = D-alanyl-D-alanine + ADP + phosphate + H(+). It participates in cell wall biogenesis; peptidoglycan biosynthesis. In terms of biological role, cell wall formation. The polypeptide is D-alanine--D-alanine ligase (Streptococcus pyogenes serotype M2 (strain MGAS10270)).